The chain runs to 329 residues: Malate dehydrogenase (329 aa).

12–18 (GAAGQIG) serves as a coordination point for NAD(+). Substrate-binding residues include Arg-95 and Arg-101. NAD(+) is bound by residues Asn-108, Gln-115, and 132-134 (VGN). Substrate contacts are provided by Asn-134 and Arg-165. The active-site Proton acceptor is the His-190.

This sequence belongs to the LDH/MDH superfamily. MDH type 2 family.

The catalysed reaction is (S)-malate + NAD(+) = oxaloacetate + NADH + H(+). Its function is as follows. Catalyzes the reversible oxidation of malate to oxaloacetate. This is Malate dehydrogenase from Ralstonia nicotianae (strain ATCC BAA-1114 / GMI1000) (Ralstonia solanacearum).